The sequence spans 348 residues: Fructose-1,6-bisphosphatase class 1 2 (348 aa).

Mg(2+) is bound by residues E93, D117, L119, and D120. Substrate-binding positions include 120–123 (DGSS), N213, Y244, and K274. A Mg(2+)-binding site is contributed by E280.

This sequence belongs to the FBPase class 1 family. As to quaternary structure, homotetramer. Requires Mg(2+) as cofactor.

The protein resides in the cytoplasm. It carries out the reaction beta-D-fructose 1,6-bisphosphate + H2O = beta-D-fructose 6-phosphate + phosphate. It participates in carbohydrate biosynthesis; gluconeogenesis. The chain is Fructose-1,6-bisphosphatase class 1 2 from Christiangramia forsetii (strain DSM 17595 / CGMCC 1.15422 / KT0803) (Gramella forsetii).